Reading from the N-terminus, the 254-residue chain is UPF0246 protein BDI_1226 (254 aa).

Belongs to the UPF0246 family.

In Parabacteroides distasonis (strain ATCC 8503 / DSM 20701 / CIP 104284 / JCM 5825 / NCTC 11152), this protein is UPF0246 protein BDI_1226.